Reading from the N-terminus, the 122-residue chain is Large ribosomal subunit protein eL18 (122 aa).

This sequence belongs to the eukaryotic ribosomal protein eL18 family.

In Thermoplasma volcanium (strain ATCC 51530 / DSM 4299 / JCM 9571 / NBRC 15438 / GSS1), this protein is Large ribosomal subunit protein eL18.